The sequence spans 949 residues: Protein translocase subunit SecA 1 (949 aa).

Residues Gln-86, 104 to 108, and Asp-493 contribute to the ATP site; that span reads GEGKT. The tract at residues 869 to 949 is disordered; it reads VDGGARERAP…AKPPKSVKKR (81 aa). Residues 925 to 934 show a composition bias toward basic and acidic residues; that stretch reads SRRERREAAR.

It belongs to the SecA family. In terms of assembly, monomer and homodimer. Part of the essential Sec protein translocation apparatus which comprises SecA, SecYEG and auxiliary proteins SecDF. Other proteins may also be involved.

Its subcellular location is the cell membrane. It is found in the cytoplasm. It carries out the reaction ATP + H2O + cellular proteinSide 1 = ADP + phosphate + cellular proteinSide 2.. Part of the Sec protein translocase complex. Interacts with the SecYEG preprotein conducting channel. Has a central role in coupling the hydrolysis of ATP to the transfer of proteins into and across the cell membrane, serving as an ATP-driven molecular motor driving the stepwise translocation of polypeptide chains across the membrane. The protein is Protein translocase subunit SecA 1 of Mycobacterium bovis (strain ATCC BAA-935 / AF2122/97).